A 478-amino-acid polypeptide reads, in one-letter code: ATP synthase subunit beta (478 aa).

Residue glycine 155 to threonine 162 coordinates ATP.

Belongs to the ATPase alpha/beta chains family. As to quaternary structure, F-type ATPases have 2 components, CF(1) - the catalytic core - and CF(0) - the membrane proton channel. CF(1) has five subunits: alpha(3), beta(3), gamma(1), delta(1), epsilon(1). CF(0) has three main subunits: a(1), b(2) and c(9-12). The alpha and beta chains form an alternating ring which encloses part of the gamma chain. CF(1) is attached to CF(0) by a central stalk formed by the gamma and epsilon chains, while a peripheral stalk is formed by the delta and b chains.

Its subcellular location is the cell inner membrane. It catalyses the reaction ATP + H2O + 4 H(+)(in) = ADP + phosphate + 5 H(+)(out). In terms of biological role, produces ATP from ADP in the presence of a proton gradient across the membrane. The catalytic sites are hosted primarily by the beta subunits. This Fuscovulum blasticum (Rhodobacter blasticus) protein is ATP synthase subunit beta.